A 503-amino-acid chain; its full sequence is U6 snRNA (guanine-N(2))-methyltransferase THUMPD2 (503 aa).

The 106-residue stretch at 161–266 (CQLEKQIKEE…DIYSVVGIPV (106 aa)) folds into the THUMP domain.

The protein belongs to the methyltransferase superfamily. As to quaternary structure, part of the heterodimeric THUMPD2-TRM112 methyltransferase complex; this complex forms an active tRNA methyltransferase, where TRMT112 acts as an activator of the catalytic subunit THUMPD2. As to expression, expressed in a variety of tissues including brain, colon, gingiva, heart, kidney, liver, lung, placenta, small intestine, spleen and thymus.

It is found in the nucleus. The catalysed reaction is guanosine in U6 snRNA + S-adenosyl-L-methionine = N(2)-methylguanosine in U6 snRNA + S-adenosyl-L-homocysteine + H(+). Catalytic subunit of the THUMPD2-TRM112 methyltransferase complex, that specifically mediates the S-adenosyl-L-methionine-dependent N(2)-methylation of guanosine nucleotides, most probably at position 72 (m2G72), in the U6snRNA of the major spliceosome. This modification in the U6 snRNA affects the constitutive splicing efficiency of introns that have suboptimal splice sites and can impact final mRNA levels. This is U6 snRNA (guanine-N(2))-methyltransferase THUMPD2 from Homo sapiens (Human).